A 1404-amino-acid polypeptide reads, in one-letter code: DNA-directed RNA polymerase subunit beta' (1404 aa).

Residues cysteine 70, cysteine 72, cysteine 85, and cysteine 88 each coordinate Zn(2+). Residues aspartate 458, aspartate 460, and aspartate 462 each contribute to the Mg(2+) site. 4 residues coordinate Zn(2+): cysteine 813, cysteine 887, cysteine 894, and cysteine 897. Residues 1377-1404 (ERRAIAESEAAELEASQAETSDENAAAE) are disordered.

The protein belongs to the RNA polymerase beta' chain family. In terms of assembly, the RNAP catalytic core consists of 2 alpha, 1 beta, 1 beta' and 1 omega subunit. When a sigma factor is associated with the core the holoenzyme is formed, which can initiate transcription. The cofactor is Mg(2+). Requires Zn(2+) as cofactor.

The catalysed reaction is RNA(n) + a ribonucleoside 5'-triphosphate = RNA(n+1) + diphosphate. In terms of biological role, DNA-dependent RNA polymerase catalyzes the transcription of DNA into RNA using the four ribonucleoside triphosphates as substrates. This is DNA-directed RNA polymerase subunit beta' from Polaromonas naphthalenivorans (strain CJ2).